Reading from the N-terminus, the 136-residue chain is Transcription antitermination protein NusB (136 aa).

Belongs to the NusB family.

Involved in transcription antitermination. Required for transcription of ribosomal RNA (rRNA) genes. Binds specifically to the boxA antiterminator sequence of the ribosomal RNA (rrn) operons. This Treponema denticola (strain ATCC 35405 / DSM 14222 / CIP 103919 / JCM 8153 / KCTC 15104) protein is Transcription antitermination protein NusB.